The chain runs to 779 residues: Kazrin (779 aa).

Residues A79 to K261 are a coiled coil. Positions Q295–N366 are disordered. S356, S371, and S391 each carry phosphoserine. Positions K403–G429 are disordered. The span at S415–L426 shows a compositional bias: polar residues. 3 consecutive SAM domains span residues W450–A515, D528–V592, and W616–F683. The disordered stretch occupies residues P685–V779. The span at S736–Y746 shows a compositional bias: basic and acidic residues.

The protein belongs to the kazrin family. Expressed in skin interfollicular epidermis and hair follicles. Expressed in tongue epithelium basal suprabasal layers.

The protein localises to the cell junction. Its subcellular location is the nucleus. It is found in the cytoplasm. The protein resides in the cytoskeleton. Its function is as follows. Component of the cornified envelope of keratinocytes. May be involved in the interplay between adherens junctions and desmosomes. The function in the nucleus is not known. The chain is Kazrin (Kazn) from Mus musculus (Mouse).